Consider the following 456-residue polypeptide: MVIAYIRNLIRKVIQRGMDHEHSALYPPAAVRGMKVLDRSAFEQEVTLPALLVPVQSLRNCRKMMKSKLVNLSINKKVVDPPAHLVGEELTAGHKLFLLKPGTTMETYSSDEKQMLGKLGVKDKIYDYRITLGYENYKHWDVLRAILPDSEMAARGFSQVGHILHVNLRDHQLPYKHIIGQVLLDKIQTARTVVNKHQNIDNKFRNFEMEVIAGENNFVTRIIEHGRKFEFDFSKVFWNSRLSTEHQRITNFVSESDVVFDVFAGVGPFAIPIAKKGCVVYANDLNPESYRWLLHNVALNKTKAKCFNSDGREFIQTELRNYLLTRSPHKVHVLMNLPAIAVEFLDVFRGLLCNGDCLAANDLSNASHKKLLSIPEVCVHLYIFAPEKDGIADLKSRIKQSLGCALPEDAVIYNVRNVAPKKQMYCVSFVLSQHWMDQKEQDVYEPAPKKIKECIS.

S-adenosyl-L-methionine is bound by residues His246, 284–285 (DL), 310–311 (DG), and Asn336.

Belongs to the class I-like SAM-binding methyltransferase superfamily. TRM5/TYW2 family. As to quaternary structure, monomer.

Its subcellular location is the mitochondrion matrix. The protein resides in the nucleus. It is found in the cytoplasm. The enzyme catalyses guanosine(37) in tRNA + S-adenosyl-L-methionine = N(1)-methylguanosine(37) in tRNA + S-adenosyl-L-homocysteine + H(+). Its function is as follows. Specifically methylates the N1 position of guanosine-37 in various cytoplasmic and mitochondrial tRNAs. Methylation is not dependent on the nature of the nucleoside 5' of the target nucleoside. This is the first step in the biosynthesis of wybutosine (yW), a modified base adjacent to the anticodon of tRNAs and required for accurate decoding. The protein is tRNA (guanine(37)-N(1))-methyltransferase of Ciona intestinalis (Transparent sea squirt).